Here is a 431-residue protein sequence, read N- to C-terminus: Serine--tRNA ligase (431 aa).

237–239 is an L-serine binding site; that stretch reads TAE. Position 268–270 (268–270) interacts with ATP; it reads RSE. Glu-291 lines the L-serine pocket. Residue 355 to 358 participates in ATP binding; it reads EISS. Ser-390 serves as a coordination point for L-serine.

Belongs to the class-II aminoacyl-tRNA synthetase family. Type-1 seryl-tRNA synthetase subfamily. In terms of assembly, homodimer. The tRNA molecule binds across the dimer.

The protein localises to the cytoplasm. It catalyses the reaction tRNA(Ser) + L-serine + ATP = L-seryl-tRNA(Ser) + AMP + diphosphate + H(+). The enzyme catalyses tRNA(Sec) + L-serine + ATP = L-seryl-tRNA(Sec) + AMP + diphosphate + H(+). The protein operates within aminoacyl-tRNA biosynthesis; selenocysteinyl-tRNA(Sec) biosynthesis; L-seryl-tRNA(Sec) from L-serine and tRNA(Sec): step 1/1. Catalyzes the attachment of serine to tRNA(Ser). Is also able to aminoacylate tRNA(Sec) with serine, to form the misacylated tRNA L-seryl-tRNA(Sec), which will be further converted into selenocysteinyl-tRNA(Sec). The sequence is that of Serine--tRNA ligase from Neisseria meningitidis serogroup C (strain 053442).